The sequence spans 316 residues: D-alanine--D-alanine ligase (316 aa).

In terms of domain architecture, ATP-grasp spans 107–303; sequence KEVFAARGLT…FEDLVERILI (197 aa). 133–188 serves as a coordination point for ATP; the sequence is AEGFGYPVVVKPSQEGSSVGVSIVKSPEELPSALELAFRYDDDILVERFIKGREIQ. Positions 256, 269, and 271 each coordinate Mg(2+).

Belongs to the D-alanine--D-alanine ligase family. Requires Mg(2+) as cofactor. Mn(2+) serves as cofactor.

The protein localises to the cytoplasm. The enzyme catalyses 2 D-alanine + ATP = D-alanyl-D-alanine + ADP + phosphate + H(+). The protein operates within cell wall biogenesis; peptidoglycan biosynthesis. Its function is as follows. Cell wall formation. In Geobacter sulfurreducens (strain ATCC 51573 / DSM 12127 / PCA), this protein is D-alanine--D-alanine ligase.